The primary structure comprises 188 residues: Peptide deformylase (188 aa).

Fe cation is bound by residues Cys-94 and His-136. Residue Glu-137 is part of the active site. Residue His-140 participates in Fe cation binding.

This sequence belongs to the polypeptide deformylase family. Requires Fe(2+) as cofactor.

It carries out the reaction N-terminal N-formyl-L-methionyl-[peptide] + H2O = N-terminal L-methionyl-[peptide] + formate. In terms of biological role, removes the formyl group from the N-terminal Met of newly synthesized proteins. Requires at least a dipeptide for an efficient rate of reaction. N-terminal L-methionine is a prerequisite for activity but the enzyme has broad specificity at other positions. In Chlorobium phaeobacteroides (strain DSM 266 / SMG 266 / 2430), this protein is Peptide deformylase.